Consider the following 2169-residue polypeptide: Vitellogenin-A1 (2169 aa).

The signal sequence occupies residues M1–A46. N-linked (GlcNAc...) asparagine glycans are attached at residues N107 and N125. Residues W116–L1008 form the Vitellogenin domain. Y159 and Y163 each carry sulfotyrosine. N-linked (GlcNAc...) asparagine glycans are attached at residues N360, N391, and N435. Disordered regions lie at residues D426–E481 and N514–E570. The span at S438–S461 shows a compositional bias: low complexity. A glycan (N-linked (GlcNAc...) asparagine) is linked at N514. Residues S517–S531 are compositionally biased toward low complexity. N538 is a glycosylation site (N-linked (GlcNAc...) asparagine). A compositionally biased stretch (low complexity) spans S541–E570. Residues N587, N763, and N781 are each glycosylated (N-linked (GlcNAc...) asparagine). 3 positions are modified to sulfotyrosine: Y1067, Y1070, and Y1074. N1140, N1233, and N1336 each carry an N-linked (GlcNAc...) asparagine glycan. 3 positions are modified to sulfotyrosine: Y1563, Y1564, and Y1570. N-linked (GlcNAc...) asparagine glycans are attached at residues N1652 and N1696. Sulfotyrosine is present on residues Y1737, Y1806, Y1809, Y1822, Y1824, and Y1888. A VWFD domain is found at P1770–T1979. 2 disulfide bridges follow: C1772/C1942 and C1794/C1978. N-linked (GlcNAc...) asparagine glycosylation is present at N1977. The segment covering E2026–S2063 has biased composition (low complexity). Residues E2026–C2081 are disordered. A compositionally biased stretch (basic and acidic residues) spans E2064–K2079.

Glycosylated, phosphorylated and sulfated. The large subunit is sulfated more extensively than the small one. As to expression, produced by the fat body, where it is cleaved in the rough endoplasmic reticulum or cis-Golgi before being secreted into hemolymph. It is then sequestered by a single class of receptor mediated endocytosis in the ovary.

Its function is as follows. Precursor of the egg-yolk proteins that are sources of nutrients during embryonic development. May supply aromatic amino acids to the cuticle of rapidly developing embryos. This Aedes aegypti (Yellowfever mosquito) protein is Vitellogenin-A1 (VGA1).